We begin with the raw amino-acid sequence, 246 residues long: 5-oxoprolinase subunit A (246 aa).

The protein belongs to the LamB/PxpA family. In terms of assembly, forms a complex composed of PxpA, PxpB and PxpC.

It carries out the reaction 5-oxo-L-proline + ATP + 2 H2O = L-glutamate + ADP + phosphate + H(+). Its function is as follows. Catalyzes the cleavage of 5-oxoproline to form L-glutamate coupled to the hydrolysis of ATP to ADP and inorganic phosphate. In Vibrio cholerae serotype O1 (strain M66-2), this protein is 5-oxoprolinase subunit A.